Here is a 244-residue protein sequence, read N- to C-terminus: Trypsin (244 aa).

The signal sequence occupies residues 1 to 15; it reads MKFLVILVLLGAAVA. A propeptide spans 16-21 (activation peptide); sequence FEDDDK. The Peptidase S1 domain occupies 22-242; sequence IVGGFTCAKN…FVTWIQSTIS (221 aa). Cystine bridges form between cysteine 28–cysteine 158, cysteine 46–cysteine 62, cysteine 130–cysteine 231, cysteine 137–cysteine 204, cysteine 169–cysteine 183, and cysteine 194–cysteine 218. Histidine 61 acts as the Charge relay system in catalysis. Ca(2+) is bound by residues glutamate 73, asparagine 75, and glutamate 83. Aspartate 105 serves as the catalytic Charge relay system. Serine 198 acts as the Charge relay system in catalysis.

It belongs to the peptidase S1 family. Ca(2+) is required as a cofactor.

The protein resides in the secreted. The protein localises to the extracellular space. It carries out the reaction Preferential cleavage: Arg-|-Xaa, Lys-|-Xaa.. In Xenopus laevis (African clawed frog), this protein is Trypsin.